Reading from the N-terminus, the 206-residue chain is MSAIKEVKSELRQFMKTLLGKISKEETQRQTEAVFEKIIESKWFQESKRLSVYVSTSGEIQTDSIIQKALEMGKEVFIPQFTKGSTAMDMVRVPDQTAFDNLPSTLWGIRQPEPKWKWQSYHETGPLDLILAPGVAFSPYGLRCGHGKGYYDRFFSTHHKHFPENSPKKIGLALREQIIGTIPISETDVELDEVIYEGETIIFDTI.

Residues 8 to 12 and R12 each bind ATP; that span reads KSELR. Residues V54, E59, and 146 to 150 each bind substrate; that span reads HGKGY. Position 143–151 (143–151) interacts with ATP; the sequence is RCGHGKGYY. 2 residues coordinate Mg(2+): D152 and D188.

It belongs to the 5-formyltetrahydrofolate cyclo-ligase family. Monomer. Mg(2+) serves as cofactor.

Its subcellular location is the cytoplasm. It catalyses the reaction (6S)-5-formyl-5,6,7,8-tetrahydrofolate + ATP = (6R)-5,10-methenyltetrahydrofolate + ADP + phosphate. Contributes to tetrahydrofolate metabolism. Helps regulate carbon flow through the folate-dependent one-carbon metabolic network that supplies carbon for the biosynthesis of purines, thymidine and amino acids. Catalyzes the irreversible conversion of 5-formyltetrahydrofolate (5-CHO-H(4)PteGlu) to yield 5,10-methenyltetrahydrofolate. This Caenorhabditis elegans protein is Probable 5-formyltetrahydrofolate cyclo-ligase.